A 689-amino-acid chain; its full sequence is Centrosomal protein of 78 kDa (689 aa).

2 positions are modified to phosphoserine: S325 and S327. Disordered regions lie at residues 432-451 (SSEV…VPEK), 563-589 (PQMT…EPKQ), and 614-689 (DSFP…TESH). Positions 450-505 (EKTSIEQEALQEKLEECLKQLKEERVIRLKVDKRVSELEHENAQLRNINFSLSEAL) form a coiled coil. Composition is skewed to basic and acidic residues over residues 573 to 587 (PKEE…KPEP) and 666 to 689 (QRKE…TESH).

It belongs to the CEP78 family. In terms of assembly, interacts with PLK4. Interacts with FAM161A. Interacts with IFT20; regulating IFT20 stability and localization. Interacts with TTC21A; regulating TTC21A stability and localization. Interacts with USP16; promoting USP16-dependent deubiquitination of tektins. Interacts with DCAF1/VPRBP; promoting localization of the EDVP complex to centrosomes. Interacts with CEP350; promoting CEP78 localization to centrosome and centriole. Widely expressed. Expressed in different retinal cell types with higher expression in cone compared to rod cells (at protein level).

The protein localises to the cytoplasm. The protein resides in the cytoskeleton. It is found in the microtubule organizing center. Its subcellular location is the centrosome. It localises to the centriole. The protein localises to the cilium basal body. Its function is as follows. Centriole wall protein that localizes to mature centrioles and regulates centriole and cilia biogenesis. Involved in centrosome duplication: required for efficient PLK4 centrosomal localization and PLK4-induced overduplication of centrioles. Involved in cilium biogenesis and controls cilium length. Acts as a regulator of protein stability by preventing ubiquitination of centrosomal proteins, such as CCP110 and tektins. Associates with the EDVP complex, preventing ubiquitination and degradation of CCP110. Promotes deubiquitination of tektin proteins (TEKT1, TEKT2, TEK3, TEKT4 and TEKT5) via its interaction with USP16. The chain is Centrosomal protein of 78 kDa from Homo sapiens (Human).